A 124-amino-acid chain; its full sequence is Fluoride-specific ion channel FluC (124 aa).

4 helical membrane-spanning segments follow: residues 4–24 (FLAV…LGLW), 34–54 (LGTL…LAWF), 67–87 (FVIT…AEVV), and 100–120 (LIAF…FYSL). Positions 74 and 77 each coordinate Na(+).

It belongs to the fluoride channel Fluc/FEX (TC 1.A.43) family.

It localises to the cell inner membrane. It carries out the reaction fluoride(in) = fluoride(out). Na(+) is not transported, but it plays an essential structural role and its presence is essential for fluoride channel function. Its function is as follows. Fluoride-specific ion channel. Important for reducing fluoride concentration in the cell, thus reducing its toxicity. The chain is Fluoride-specific ion channel FluC from Thiobacillus denitrificans (strain ATCC 25259 / T1).